Reading from the N-terminus, the 275-residue chain is Large ribosomal subunit protein uL2 (275 aa).

Disordered stretches follow at residues 1–20 (MAVK…TTAD) and 214–275 (WLGR…TRRK). Positions 255–275 (KGLKTRRKRKTSDRFIVTRRK) are enriched in basic residues.

The protein belongs to the universal ribosomal protein uL2 family. As to quaternary structure, part of the 50S ribosomal subunit. Forms a bridge to the 30S subunit in the 70S ribosome.

One of the primary rRNA binding proteins. Required for association of the 30S and 50S subunits to form the 70S ribosome, for tRNA binding and peptide bond formation. It has been suggested to have peptidyltransferase activity; this is somewhat controversial. Makes several contacts with the 16S rRNA in the 70S ribosome. The polypeptide is Large ribosomal subunit protein uL2 (rplB) (Deinococcus radiodurans (strain ATCC 13939 / DSM 20539 / JCM 16871 / CCUG 27074 / LMG 4051 / NBRC 15346 / NCIMB 9279 / VKM B-1422 / R1)).